The following is a 176-amino-acid chain: 2-C-methyl-D-erythritol 2,4-cyclodiphosphate synthase (176 aa).

A divalent metal cation is bound by residues D23, H25, and H60. 23–25 (DSH) provides a ligand contact to 4-CDP-2-C-methyl-D-erythritol 2-phosphate. 149 to 152 (TSGE) contacts 4-CDP-2-C-methyl-D-erythritol 2-phosphate.

This sequence belongs to the IspF family. In terms of assembly, homotrimer. It depends on a divalent metal cation as a cofactor.

It carries out the reaction 4-CDP-2-C-methyl-D-erythritol 2-phosphate = 2-C-methyl-D-erythritol 2,4-cyclic diphosphate + CMP. The protein operates within isoprenoid biosynthesis; isopentenyl diphosphate biosynthesis via DXP pathway; isopentenyl diphosphate from 1-deoxy-D-xylulose 5-phosphate: step 4/6. In terms of biological role, involved in the biosynthesis of isopentenyl diphosphate (IPP) and dimethylallyl diphosphate (DMAPP), two major building blocks of isoprenoid compounds. Catalyzes the conversion of 4-diphosphocytidyl-2-C-methyl-D-erythritol 2-phosphate (CDP-ME2P) to 2-C-methyl-D-erythritol 2,4-cyclodiphosphate (ME-CPP) with a corresponding release of cytidine 5-monophosphate (CMP). The protein is 2-C-methyl-D-erythritol 2,4-cyclodiphosphate synthase of Chlamydia abortus (strain DSM 27085 / S26/3) (Chlamydophila abortus).